Here is a 497-residue protein sequence, read N- to C-terminus: TBC1 domain family member 22A (497 aa).

The disordered stretch occupies residues 83–147 (RNHSQRQGRP…DAAPLQRSQS (65 aa)). A phosphoserine mark is found at Ser112, Ser125, and Ser147. The Rab-GAP TBC domain maps to 202–426 (GIPKPVRPMT…RLWDTYQSEP (225 aa)).

Homodimer. Interacts with ACBD3 and ARFGEF1. Interacts with YWHAB, YWHAE, YWHAG, YWHAH, YWHAQ and YWHAZ.

May act as a GTPase-activating protein for Rab family protein(s). The sequence is that of TBC1 domain family member 22A (TBC1D22A) from Macaca fascicularis (Crab-eating macaque).